Here is a 349-residue protein sequence, read N- to C-terminus: Methylthioribose-1-phosphate isomerase (349 aa).

Substrate contacts are provided by residues 51–53, R94, and Q199; that span reads RGA. D240 acts as the Proton donor in catalysis. Position 250–251 (250–251) interacts with substrate; sequence NK.

This sequence belongs to the EIF-2B alpha/beta/delta subunits family. MtnA subfamily. Homodimer.

It catalyses the reaction 5-(methylsulfanyl)-alpha-D-ribose 1-phosphate = 5-(methylsulfanyl)-D-ribulose 1-phosphate. It participates in amino-acid biosynthesis; L-methionine biosynthesis via salvage pathway; L-methionine from S-methyl-5-thio-alpha-D-ribose 1-phosphate: step 1/6. Its function is as follows. Catalyzes the interconversion of methylthioribose-1-phosphate (MTR-1-P) into methylthioribulose-1-phosphate (MTRu-1-P). This chain is Methylthioribose-1-phosphate isomerase, found in Bacillus mycoides (strain KBAB4) (Bacillus weihenstephanensis).